The chain runs to 147 residues: TRAF-interacting protein with FHA domain-containing protein B (147 aa).

Positions 36–108 (LLVGRGQDTH…LHSVNRISFS (73 aa)) constitute an FHA domain.

As to quaternary structure, interacts with TIFA.

Its function is as follows. Inhibits TIFA-mediated TRAF6 activation possibly by inducing a conformational change in TIFA. In Rattus norvegicus (Rat), this protein is TRAF-interacting protein with FHA domain-containing protein B.